The sequence spans 146 residues: Interleukin-3 (146 aa).

Positions Met-1–His-17 are cleaved as a signal peptide. An N-linked (GlcNAc...) asparagine glycan is attached at Asn-65.

Belongs to the IL-3 family. In terms of assembly, monomer. In terms of tissue distribution, activated T-cells, mast cells, natural killer cells.

It is found in the secreted. Its function is as follows. Granulocyte/macrophage colony-stimulating factors are cytokines that act in hematopoiesis by controlling the production, differentiation, and function of 2 related white cell populations of the blood, the granulocytes and the monocytes-macrophages. In terms of biological role, this CSF induces granulocytes, macrophages, mast cells, stem cells, erythroid cells, eosinophils and megakaryocytes. This chain is Interleukin-3 (IL3), found in Ovis aries (Sheep).